A 142-amino-acid chain; its full sequence is Hemoglobin subunit theta-1 (142 aa).

Residues 2–142 (ALAAADRATV…VISALASDCR (141 aa)) enclose the Globin domain. His59 and His88 together coordinate heme b.

The protein belongs to the globin family.

This Equus caballus (Horse) protein is Hemoglobin subunit theta-1 (HBQ1).